The sequence spans 72 residues: UPF0337 protein bsl2407 (72 aa).

The tract at residues 1 to 55 is disordered; the sequence is MGSTTDKIKGNANEAIGKAKQGIGEATGSDRLKGEGVVQEVKGKGQQAMGDAKDA. Residues 35–47 show a composition bias toward low complexity; it reads EGVVQEVKGKGQQ.

It belongs to the UPF0337 (CsbD) family.

The chain is UPF0337 protein bsl2407 from Bradyrhizobium diazoefficiens (strain JCM 10833 / BCRC 13528 / IAM 13628 / NBRC 14792 / USDA 110).